The primary structure comprises 198 residues: Nucleoid occlusion factor SlmA (198 aa).

The 61-residue stretch at 10–70 folds into the HTH tetR-type domain; that stretch reads NRREEILQSL…SLIEFIEDSL (61 aa). The H-T-H motif DNA-binding region spans 33–52; sequence TTAKLAASVGVSEAALYRHF. The stretch at 117-144 forms a coiled coil; it reads EQDRLQGRINQLFERIEAQLRQVLREKR.

The protein belongs to the nucleoid occlusion factor SlmA family. As to quaternary structure, homodimer. Interacts with FtsZ.

The protein resides in the cytoplasm. The protein localises to the nucleoid. Functionally, required for nucleoid occlusion (NO) phenomenon, which prevents Z-ring formation and cell division over the nucleoid. Acts as a DNA-associated cell division inhibitor that binds simultaneously chromosomal DNA and FtsZ, and disrupts the assembly of FtsZ polymers. SlmA-DNA-binding sequences (SBS) are dispersed on non-Ter regions of the chromosome, preventing FtsZ polymerization at these regions. This is Nucleoid occlusion factor SlmA from Salmonella agona (strain SL483).